Consider the following 96-residue polypeptide: uncharacterized protein (96 aa).

Asparagine 4 carries N-linked (GlcNAc...) asparagine glycosylation. A helical transmembrane segment spans residues 59–81 (VFFTIFDTIITIIVRSGIPFPLL).

The protein resides in the membrane. This is an uncharacterized protein from Saccharomyces cerevisiae (strain ATCC 204508 / S288c) (Baker's yeast).